The primary structure comprises 65 residues: Weak neurotoxin 6 (65 aa).

Cystine bridges form between Cys-3/Cys-24, Cys-6/Cys-11, Cys-17/Cys-42, Cys-46/Cys-57, and Cys-58/Cys-63.

The protein belongs to the three-finger toxin family. Ancestral subfamily. Orphan group II sub-subfamily. Expressed by the venom gland.

Its subcellular location is the secreted. Its function is as follows. Binds with low affinity to muscular (alpha-1-beta-1-delta-epsilon/CHRNA1-CHRNB1-CHRND-CHRNE) and very low affinity to neuronal (alpha-7/CHRNA7) nicotinic acetylcholine receptor (nAChR). This is Weak neurotoxin 6 from Naja naja (Indian cobra).